A 62-amino-acid chain; its full sequence is Protein DsrB (62 aa).

It belongs to the DsrB family.

This chain is Protein DsrB, found in Enterobacter sp. (strain 638).